The primary structure comprises 372 residues: Putative 26S proteasome regulatory subunit homolog MTH_1011 (372 aa).

ATP is bound at residue 164–171 (GSPGTGKT).

The protein belongs to the AAA ATPase family.

Its function is as follows. The 26S proteasome is involved in the ATP-dependent degradation of ubiquitinated proteins. The regulatory (or ATPase) complex confers ATP dependency and substrate specificity to the 26S complex. The protein is Putative 26S proteasome regulatory subunit homolog MTH_1011 of Methanothermobacter thermautotrophicus (strain ATCC 29096 / DSM 1053 / JCM 10044 / NBRC 100330 / Delta H) (Methanobacterium thermoautotrophicum).